A 2752-amino-acid chain; its full sequence is Piezo-type mechanosensitive ion channel component 2 (2752 aa).

Over 1–12 (MASEVVCGLIFR) the chain is Cytoplasmic. The chain crosses the membrane as a helical span at residues 13 to 24 (LLLPICLAVACA). Residues 25 to 30 (FRYNGL) are Extracellular-facing. A helical membrane pass occupies residues 31–43 (SFVYLIYLLLIPL). Residues 44-50 (FSEPTKT) are Cytoplasmic-facing. A helical transmembrane segment spans residues 51 to 76 (TMQGHTGRLLKSLCFISLSFLLLHII). Over 77 to 122 (FHITLVSLEAQHRIAPGYNCSTWEKTFRQIGFESLKGADAGNGIRV) the chain is Extracellular. The N-linked (GlcNAc...) asparagine glycan is linked to N95. The chain crosses the membrane as a helical span at residues 123 to 141 (FVPDIGMFIASLTIWLLCR). Over 142–221 (NIVQKPVTDE…KEFIGNMITT (80 aa)) the chain is Cytoplasmic. A helical membrane pass occupies residues 222 to 237 (AGKVVVTILLGSSGMM). Topologically, residues 238 to 240 (LPS) are extracellular. The helical transmembrane segment at 241 to 258 (LTSSVYFFVFLGLCTWWS) threads the bilayer. Over 259-264 (WCRTFD) the chain is Cytoplasmic. The helical transmembrane segment at 265–287 (PLLFSCLCVLLAIFTAGHLIGLY) threads the bilayer. Over 288–335 (LYQFQFFQEAVPPNDYYARLFGIKSVIQTDCSSTWKIIVNPDLSWYHH) the chain is Extracellular. Residues 336–355 (ANPILLLVMYYTLATLIRIW) form a helical membrane-spanning segment. Over 356–492 (LQEPLVQDEG…SIKVHAMVSV (137 aa)) the chain is Cytoplasmic. Residues 446-478 (STPQYRWEPSDESSEKREEEEEEKEEFEEERSR) are disordered. A compositionally biased stretch (acidic residues) spans 463–474 (EEEEEEKEEFEE). The helical transmembrane segment at 493–514 (FQFIMKQSYICALIAMMAWSIT) threads the bilayer. Residues 515–519 (YHSWL) are Extracellular-facing. A helical transmembrane segment spans residues 520–531 (TFVLLIWSCTLW). The Cytoplasmic portion of the chain corresponds to 532 to 535 (MIRN). A helical membrane pass occupies residues 536 to 562 (RRKYAMISSPFMVVYGNLLLILQYIWS). Over 563-583 (FELPEIKKVPGFLEKKEPGEL) the chain is Extracellular. A helical membrane pass occupies residues 584 to 614 (ASKILFTITFWLLLRQHLTEQKALQEKEALL). At 615–685 (SEVKIGSQEN…GNLVVAMFIK (71 aa)) the chain is on the cytoplasmic side. Acidic residues predominate over residues 623-632 (ENEEKDEELQ). Residues 623–664 (ENEEKDEELQDIQVEGEPKEEEEEEAKEEKQERKKVEQEEAE) form a disordered region. Over residues 649-660 (KEEKQERKKVEQ) the composition is skewed to basic and acidic residues. A helical transmembrane segment spans residues 686–699 (YWIYVCGGMFFFVS). Topologically, residues 700-705 (FEGKIV) are extracellular. Residues 706–724 (MYKIIYMVLFLFCVALYQV) traverse the membrane as a helical segment. Over 725–733 (HYEWWRKIL) the chain is Cytoplasmic. The helical transmembrane segment at 734 to 753 (KYFWMSVVIYTMLVLIFIYT) threads the bilayer. The Extracellular portion of the chain corresponds to 754–785 (YQFENFPGLWQNMTGLKKEKLEDLGLKQFTVA). The chain crosses the membrane as a helical span at residues 786–807 (ELFTRIFIPTSFLLVCILHLHY). At 808–940 (FHDRFLELTD…QVFMWWILEL (133 aa)) the chain is on the cytoplasmic side. S838 carries the post-translational modification Phosphoserine. Residues 862–883 (PGEEKLEGYSEKAQKGDLGKDS) are compositionally biased toward basic and acidic residues. Positions 862-902 (PGEEKLEGYSEKAQKGDLGKDSEESEEDGEEEEESEEEEET) are disordered. A compositionally biased stretch (acidic residues) spans 884–902 (EESEEDGEEEEESEEEEET). A helical membrane pass occupies residues 941-956 (HIIKIVSSYIIWVSVK). Residues 957-962 (EVSLFN) are Extracellular-facing. The helical transmembrane segment at 963-972 (YVFLISWAFA) threads the bilayer. Over 973 to 980 (LPYAKLRR) the chain is Cytoplasmic. The chain crosses the membrane as a helical span at residues 981–1001 (LASSVCTVWTCVIIVCKMLYQ). Residues 1002–1057 (LQTIKPENFSVNCSLPNENQTNIPFNELNKSLLYSAPIDPTEWVGLRKSSPLLVYL) are Extracellular-facing. A glycan (N-linked (GlcNAc...) asparagine) is linked at N1013. C1014 and C1192 are joined by a disulfide. The chain crosses the membrane as a helical span at residues 1058 to 1082 (RNNLLMLAILAFEVTIYRHQEYYRG). Residues 1083-1123 (RNNLTAPVSRTIFHDITRLHLDDGLINCAKYFINYFFYKFG) lie on the Cytoplasmic side of the membrane. Residues 1124-1138 (LETCFLMSVNVIGQR) traverse the membrane as a helical segment. Over 1139–1140 (MD) the chain is Extracellular. The chain crosses the membrane as a helical span at residues 1141-1154 (FYAMIHACWLIAVL). At 1155 to 1165 (YRRRRKAIAEI) the chain is on the cytoplasmic side. The helical transmembrane segment at 1166 to 1185 (WPKYCCFLACIITFQYFICI) threads the bilayer. The Extracellular segment spans residues 1186-1222 (GIPPAPCRDYPWRFKGASFNDNIIKWLYFPDFIVRPN). Residues 1223–1243 (PVFLVYDFMLLLCASLQRQIF) traverse the membrane as a helical segment. At 1244 to 1297 (EDENKAAVRIMAGDNVEICMNLDAASFSQHNPVPDFIHCRSYLDMSKVIIFSYL) the chain is on the cytoplasmic side. Residues 1298 to 1310 (FWFVLTIIFITGT) form a helical membrane-spanning segment. Residues 1311-1316 (TRISIF) are Extracellular-facing. A helical transmembrane segment spans residues 1317-1329 (CMGYLVACFYFLL). Residues 1330–1338 (FGGDLLLKP) lie on the Cytoplasmic side of the membrane. The helical transmembrane segment at 1339–1364 (IKSILRYWDWLIAYNVFVITMKNILS) threads the bilayer. Residues 1365-1413 (IGACGYIGTLVHNSCWLIQAFSLACTVKGYQMPAANSPCTLPSGEAGII) are Extracellular-facing. Residues 1414–1430 (WDSICFAFLLLQRRVFM) traverse the membrane as a helical segment. The Cytoplasmic portion of the chain corresponds to 1431–1921 (SYYFLHVVAD…YAMYNTLVAR (491 aa)). Residues 1458–1529 (TIVKAVKARI…EREADKQKAK (72 aa)) adopt a coiled-coil conformation. 3 disordered regions span residues 1488–1534 (QQKY…KKKQ), 1593–1636 (ALRQ…KKSD), and 1844–1868 (SQDDSAGKNRMAVSPDDSRTDKLGS). The segment covering 1594–1615 (LRQRHKEKKRSAREERKRRRKG) has biased composition (basic residues). The chain crosses the membrane as a helical span at residues 1922–1936 (SEMVCYFVIILNHMV). Residues 1937-1943 (SASMITL) are Extracellular-facing. The chain crosses the membrane as a helical span at residues 1944–1955 (LLPILIFLWAML). Over 1956-1961 (SVPRPS) the chain is Cytoplasmic. The helical transmembrane segment at 1962-1983 (RRFWMMAIVYTEVAIVVKYFFQ) threads the bilayer. Over 1984–2016 (FGFFPWNKNVEVNKDKPYHPPNIIGVEKKEGYV) the chain is Extracellular. The helical transmembrane segment at 2017 to 2035 (LYDLIQLLALFFHRSILKC) threads the bilayer. Over 2036 to 2189 (HGLWDEDDMT…HPEYSAVTDV (154 aa)) the chain is Cytoplasmic. Disordered stretches follow at residues 2047–2069 (SGMAREESDDELSLGHGRRDSSD) and 2090–2135 (QQTA…SVLS). Residues 2100-2127 (GSSSEPSQRSSFSSNRSQRGSTSTRNSS) show a composition bias toward low complexity. The helical transmembrane segment at 2190-2209 (YVLMFLADTVDFIIIVFGFW) threads the bilayer. At 2210-2231 (AFGKHSAAADITSSLSEDQVPG) the chain is on the extracellular side. Residues 2232–2252 (PFLVMVLIQFGTMVVDRALYL) traverse the membrane as a helical segment. Topologically, residues 2253–2256 (RKTV) are cytoplasmic. Residues 2257–2280 (LGKVIFQVILVFGIHFWMFFILPG) form a helical membrane-spanning segment. The Extracellular portion of the chain corresponds to 2281-2289 (VTERKFSQN). The chain crosses the membrane as a helical span at residues 2290–2312 (LVAQLWYFVKCVYFGLSAYQIRC). Residues 2313–2397 (GYPTRVLGNF…YPQPRGQKKK (85 aa)) lie on the Cytoplasmic side of the membrane. The helical transmembrane segment at 2398–2421 (KVVKYGMGGMIIVLLICIVWFPLL) threads the bilayer. The Extracellular segment spans residues 2422 to 2669 (FMSLIKSVAG…PSLGFLAGYG (248 aa)). A helical transmembrane segment spans residues 2670-2690 (IMGLYASVVLVIGKFVREFFS). Residues 2691–2752 (GISHSIMFEE…MIKWTREKTN (62 aa)) lie on the Cytoplasmic side of the membrane.

The protein belongs to the PIEZO (TC 1.A.75) family. In terms of assembly, homotrimer; the homotrimer forms a propeller-shaped Piezo channel with a cation-ion conducting pore. Heterotrimeric interaction may occur between PIEZO1 and PIEZO2. Interacts with STOML3. Interacts with TMC7; the interaction inhibits PIEZO2-conducted mechanically activated currents. Interacts with TMC1; the interaction may be part of the MET complex. Interacts with MDFIC (via C-terminus); the interaction prolongs Piezo channel inactivation. Interacts with MDFI (via C-terminus); the interaction prolongs Piezo channel inactivation.

It localises to the cell membrane. The catalysed reaction is Ca(2+)(in) = Ca(2+)(out). Regulated by auxillary subunits MDFIC and MDFI. Channel activity is inhibited by TMEM120A. Phosphatidic acid and lysophosphatidic acid inhibit PIEZO2 channel activity. Pore-forming subunit of the mechanosensitive non-specific cation Piezo channel required for rapidly adapting mechanically activated (MA) currents and has a key role in sensing touch and tactile pain. Piezo channels are homotrimeric three-blade propeller-shaped structures that utilize a cap-motion and plug-and-latch mechanism to gate their ion-conducting pathways. Expressed in sensory neurons, is essential for diverse physiological processes, including respiratory control, systemic metabolism, urinary function, and proprioception. Mediates airway stretch sensing, enabling efficient respiration at birth and maintaining normal breathing in adults. It regulates brown and beige adipose tissue morphology and function, preventing systemic hypermetabolism. In the lower urinary tract, acts as a sensor in both the bladder urothelium and innervating sensory neurons being required for bladder-stretch sensing and urethral micturition reflexes, ensuring proper urinary function. Additionally, PIEZO2 serves as the principal mechanotransducer in proprioceptors, facilitating proprioception and coordinated body movements. In inner ear hair cells, PIEZO1/2 subunits may constitute part of the mechanotransducer (MET) non-selective cation channel complex where they may act as pore-forming ion-conducting component in the complex. Required for Merkel-cell mechanotransduction. Plays a major role in light-touch mechanosensation. The protein is Piezo-type mechanosensitive ion channel component 2 of Homo sapiens (Human).